The chain runs to 347 residues: Farnesyl pyrophosphate synthase ERG20 (347 aa).

Residues K50, R53, and Q88 each contribute to the isopentenyl diphosphate site. Mg(2+) contacts are provided by D95 and D99. R104 is a binding site for dimethylallyl diphosphate. R105 serves as a coordination point for isopentenyl diphosphate. The dimethylallyl diphosphate site is built by K192, T193, Q232, K249, and K258.

This sequence belongs to the FPP/GGPP synthase family. Mg(2+) serves as cofactor.

It carries out the reaction isopentenyl diphosphate + dimethylallyl diphosphate = (2E)-geranyl diphosphate + diphosphate. The catalysed reaction is isopentenyl diphosphate + (2E)-geranyl diphosphate = (2E,6E)-farnesyl diphosphate + diphosphate. It functions in the pathway isoprenoid biosynthesis; farnesyl diphosphate biosynthesis; farnesyl diphosphate from geranyl diphosphate and isopentenyl diphosphate: step 1/1. It participates in isoprenoid biosynthesis; geranyl diphosphate biosynthesis; geranyl diphosphate from dimethylallyl diphosphate and isopentenyl diphosphate: step 1/1. Functionally, farnesyl pyrophosphate synthase; part of the second module of ergosterol biosynthesis pathway that includes the middle steps of the pathway. ERG20 catalyzes the sequential condensation of isopentenyl pyrophosphate with dimethylallyl pyrophosphate, and then with the resultant geranylpyrophosphate to the ultimate product farnesyl pyrophosphate. The second module is carried out in the vacuole and involves the formation of farnesyl diphosphate, which is also an important intermediate in the biosynthesis of ubiquinone, dolichol, heme and prenylated proteins. Activity by the mevalonate kinase ERG12 (FG05912) first converts mevalonate into 5-phosphomevalonate. 5-phosphomevalonate is then further converted to 5-diphosphomevalonate by the phosphomevalonate kinase ERG8 (FG09764). The diphosphomevalonate decarboxylase ERG19 (FG10424) then produces isopentenyl diphosphate. The isopentenyl-diphosphate delta-isomerase IDI1 (FG09722) then catalyzes the 1,3-allylic rearrangement of the homoallylic substrate isopentenyl (IPP) to its highly electrophilic allylic isomer, dimethylallyl diphosphate (DMAPP). Finally the farnesyl diphosphate synthase ERG20 (FG06784) catalyzes the sequential condensation of isopentenyl pyrophosphate with dimethylallyl pyrophosphate, and then with the resultant geranylpyrophosphate to the ultimate product farnesyl pyrophosphate. The protein is Farnesyl pyrophosphate synthase ERG20 of Gibberella zeae (strain ATCC MYA-4620 / CBS 123657 / FGSC 9075 / NRRL 31084 / PH-1) (Wheat head blight fungus).